The primary structure comprises 234 residues: Ribonuclease HII (234 aa).

Positions 30–221 (GPVAGVDEAG…VRNAAMGSSL (192 aa)) constitute an RNase H type-2 domain. Asp36, Glu37, and Asp130 together coordinate a divalent metal cation.

This sequence belongs to the RNase HII family. It depends on Mn(2+) as a cofactor. Mg(2+) serves as cofactor.

It localises to the cytoplasm. It catalyses the reaction Endonucleolytic cleavage to 5'-phosphomonoester.. Endonuclease that specifically degrades the RNA of RNA-DNA hybrids. This Mycobacteroides abscessus (strain ATCC 19977 / DSM 44196 / CCUG 20993 / CIP 104536 / JCM 13569 / NCTC 13031 / TMC 1543 / L948) (Mycobacterium abscessus) protein is Ribonuclease HII.